The following is a 23-amino-acid chain: Potassium channel toxin alpha-KTx 13.3 (23 aa).

3 cysteine pairs are disulfide-bonded: C2–C15, C5–C20, and C9–C22. Residues 13 to 20 (GKCINGRC) form an interaction with Ca(2+)-activated K(+) channels region. The residue at position 23 (Y23) is a Tyrosine amide.

As to expression, expressed by the venom gland.

It is found in the secreted. Its function is as follows. Reversibly blocks Shaker B potassium channels, with a dissociation constant of 200 nM. The protein is Potassium channel toxin alpha-KTx 13.3 of Tityus pachyurus (Colombian scorpion).